We begin with the raw amino-acid sequence, 81 residues long: Photosystem I iron-sulfur center (81 aa).

4Fe-4S ferredoxin-type domains follow at residues 2–31 (SHSV…MIPW) and 39–68 (IASA…VRVY). 8 residues coordinate [4Fe-4S] cluster: C11, C14, C17, C21, C48, C51, C54, and C58.

The eukaryotic PSI reaction center is composed of at least 11 subunits. [4Fe-4S] cluster serves as cofactor.

The protein localises to the plastid. The protein resides in the chloroplast thylakoid membrane. It catalyses the reaction reduced [plastocyanin] + hnu + oxidized [2Fe-2S]-[ferredoxin] = oxidized [plastocyanin] + reduced [2Fe-2S]-[ferredoxin]. Its function is as follows. Apoprotein for the two 4Fe-4S centers FA and FB of photosystem I (PSI); essential for photochemical activity. FB is the terminal electron acceptor of PSI, donating electrons to ferredoxin. The C-terminus interacts with PsaA/B/D and helps assemble the protein into the PSI complex. Required for binding of PsaD and PsaE to PSI. PSI is a plastocyanin-ferredoxin oxidoreductase, converting photonic excitation into a charge separation, which transfers an electron from the donor P700 chlorophyll pair to the spectroscopically characterized acceptors A0, A1, FX, FA and FB in turn. This Triticum aestivum (Wheat) protein is Photosystem I iron-sulfur center.